We begin with the raw amino-acid sequence, 538 residues long: Metal transporter Nramp5 (538 aa).

12 helical membrane passes run 44–64 (FLAHVGPGFMVSLAYLDPGNL), 77–97 (ELLWVILIGLIFALIIQSLAA), 118–138 (FVKIFLWLLAELAVIAADIPE), 140–160 (IGTAFAFNILFHIPVWVGVLI), 181–201 (FLISMLVFVMAACFFGELSIV), 227–247 (IALLGALVMPHNLFLHSALVL), 264–284 (FFLYESGFALFVALLINIAVV), 324–346 (SAIVYGVALLASGQSSTITGTYA), 365–385 (NLMTRTIAIAPSLIVSIIGGS), 391–411 (LIIIASMILSFELPFALIPLL), 427–447 (IYIIVFSWFLGLLIIGINMYF), and 467–487 (VLVGAAVFPFMLVYIVAVVYL). Residues 518–538 (AVDDDEPLPYRDDLADIPLPR) form a disordered region.

Belongs to the NRAMP (TC 2.A.55) family.

It localises to the membrane. Probable metal transporter. The sequence is that of Metal transporter Nramp5 (NRAMP5) from Oryza sativa subsp. japonica (Rice).